Here is a 1172-residue protein sequence, read N- to C-terminus: DNA-directed RNA polymerase subunit beta (1172 aa).

This sequence belongs to the RNA polymerase beta chain family. As to quaternary structure, the RNAP catalytic core consists of 2 alpha, 1 beta, 1 beta' and 1 omega subunit. When a sigma factor is associated with the core the holoenzyme is formed, which can initiate transcription.

It catalyses the reaction RNA(n) + a ribonucleoside 5'-triphosphate = RNA(n+1) + diphosphate. Functionally, DNA-dependent RNA polymerase catalyzes the transcription of DNA into RNA using the four ribonucleoside triphosphates as substrates. In Mycobacterium sp. (strain KMS), this protein is DNA-directed RNA polymerase subunit beta.